The chain runs to 432 residues: Enolase (432 aa).

Glutamine 166 contributes to the (2R)-2-phosphoglycerate binding site. Glutamate 208 (proton donor) is an active-site residue. 3 residues coordinate Mg(2+): aspartate 245, glutamate 291, and aspartate 318. (2R)-2-phosphoglycerate-binding residues include lysine 343, arginine 372, serine 373, and lysine 394. Lysine 343 (proton acceptor) is an active-site residue.

The protein belongs to the enolase family. Requires Mg(2+) as cofactor.

Its subcellular location is the cytoplasm. The protein localises to the secreted. It is found in the cell surface. It catalyses the reaction (2R)-2-phosphoglycerate = phosphoenolpyruvate + H2O. It functions in the pathway carbohydrate degradation; glycolysis; pyruvate from D-glyceraldehyde 3-phosphate: step 4/5. Catalyzes the reversible conversion of 2-phosphoglycerate (2-PG) into phosphoenolpyruvate (PEP). It is essential for the degradation of carbohydrates via glycolysis. The sequence is that of Enolase from Leptospira interrogans serogroup Icterohaemorrhagiae serovar copenhageni (strain Fiocruz L1-130).